Reading from the N-terminus, the 348-residue chain is Phospho-2-dehydro-3-deoxyheptonate aldolase, Trp-sensitive (348 aa).

This sequence belongs to the class-I DAHP synthase family.

The catalysed reaction is D-erythrose 4-phosphate + phosphoenolpyruvate + H2O = 7-phospho-2-dehydro-3-deoxy-D-arabino-heptonate + phosphate. The protein operates within metabolic intermediate biosynthesis; chorismate biosynthesis; chorismate from D-erythrose 4-phosphate and phosphoenolpyruvate: step 1/7. In terms of biological role, stereospecific condensation of phosphoenolpyruvate (PEP) and D-erythrose-4-phosphate (E4P) giving rise to 3-deoxy-D-arabino-heptulosonate-7-phosphate (DAHP). The sequence is that of Phospho-2-dehydro-3-deoxyheptonate aldolase, Trp-sensitive (aroH) from Escherichia coli O157:H7.